We begin with the raw amino-acid sequence, 439 residues long: D-inositol 3-phosphate glycosyltransferase (439 aa).

Histidine 21 is a binding site for 1D-myo-inositol 3-phosphate. UDP-N-acetyl-alpha-D-glucosamine is bound by residues 27-28 (QP) and glycine 35. 1D-myo-inositol 3-phosphate is bound by residues 32–37 (DAGGMN), lysine 90, tyrosine 123, threonine 147, and arginine 167. Arginine 241, lysine 246, and glutamine 299 together coordinate UDP-N-acetyl-alpha-D-glucosamine. 3 residues coordinate Mg(2+): tyrosine 308, arginine 309, and alanine 311. Residues glutamate 321 and glutamate 329 each contribute to the UDP-N-acetyl-alpha-D-glucosamine site. Threonine 335 is a binding site for Mg(2+).

This sequence belongs to the glycosyltransferase group 1 family. MshA subfamily. As to quaternary structure, homodimer.

The enzyme catalyses 1D-myo-inositol 3-phosphate + UDP-N-acetyl-alpha-D-glucosamine = 1D-myo-inositol 2-acetamido-2-deoxy-alpha-D-glucopyranoside 3-phosphate + UDP + H(+). In terms of biological role, catalyzes the transfer of a N-acetyl-glucosamine moiety to 1D-myo-inositol 3-phosphate to produce 1D-myo-inositol 2-acetamido-2-deoxy-glucopyranoside 3-phosphate in the mycothiol biosynthesis pathway. This chain is D-inositol 3-phosphate glycosyltransferase, found in Mycobacterium sp. (strain JLS).